Consider the following 96-residue polypeptide: MRLSFIIVAVSLLAGGSGAAGAAYPASDVLTSRGTNEGARTGKRSLRYDSNVERTGEEDDEIKFLPDAEKLAQLAKLAHTNKADSLGTSLKNFLSN.

The signal sequence occupies residues 1-19 (MRLSFIIVAVSLLAGGSGA). The disordered stretch occupies residues 27 to 59 (SDVLTSRGTNEGARTGKRSLRYDSNVERTGEED). Positions 44 to 59 (RSLRYDSNVERTGEED) match the RxLR-dEER motif. A compositionally biased stretch (basic and acidic residues) spans 46-55 (LRYDSNVERT).

This sequence belongs to the RxLR effector family.

The protein localises to the secreted. It localises to the host nucleus. It is found in the host cytoplasm. Effector that enhances P.infestans colonization of Nicotiana benthamiana leaves. In Phytophthora infestans (strain T30-4) (Potato late blight agent), this protein is RxLR effector protein PITG_11507.